We begin with the raw amino-acid sequence, 488 residues long: Cobyric acid synthase (488 aa).

In terms of domain architecture, GATase cobBQ-type spans 250–438 (DITIAIIRLP…LHGIFDNGSW (189 aa)). The Nucleophile role is filled by Cys331. His430 is an active-site residue.

The protein belongs to the CobB/CobQ family. CobQ subfamily.

Its pathway is cofactor biosynthesis; adenosylcobalamin biosynthesis. Catalyzes amidations at positions B, D, E, and G on adenosylcobyrinic A,C-diamide. NH(2) groups are provided by glutamine, and one molecule of ATP is hydrogenolyzed for each amidation. The chain is Cobyric acid synthase from Trichodesmium erythraeum (strain IMS101).